The primary structure comprises 154 residues: uncharacterized protein (154 aa).

The HTH marR-type domain occupies 1-143 (MTESERALLT…LRKLAGSLTK (143 aa)). Residues 57–80 (LSKLAMSLDLKPASVTRMTDILYK) constitute a DNA-binding region (H-T-H motif).

This is an uncharacterized protein from Bacillus subtilis (strain 168).